A 115-amino-acid chain; its full sequence is Large ribosomal subunit protein bL20 (115 aa).

The protein belongs to the bacterial ribosomal protein bL20 family.

In terms of biological role, binds directly to 23S ribosomal RNA and is necessary for the in vitro assembly process of the 50S ribosomal subunit. It is not involved in the protein synthesizing functions of that subunit. This is Large ribosomal subunit protein bL20 from Prochlorococcus marinus (strain AS9601).